A 476-amino-acid polypeptide reads, in one-letter code: 8-amino-7-oxononanoate synthase (476 aa).

R24 serves as a coordination point for substrate. Position 171–172 (171–172 (GF)) interacts with pyridoxal 5'-phosphate. H210 contributes to the substrate binding site. Pyridoxal 5'-phosphate is bound by residues S260, 285–288 (DDAH), and 316–319 (TLSK). At K319 the chain carries N6-(pyridoxal phosphate)lysine. A substrate-binding site is contributed by T427. The short motif at 474 to 476 (PKL) is the Peroxisomal targeting signal PTS1 element.

This sequence belongs to the class-II pyridoxal-phosphate-dependent aminotransferase family. BioF subfamily. Monomer. Pyridoxal 5'-phosphate is required as a cofactor.

It localises to the cytoplasm. The protein localises to the cytosol. It is found in the peroxisome. It carries out the reaction 6-carboxyhexanoyl-[ACP] + L-alanine + H(+) = (8S)-8-amino-7-oxononanoate + holo-[ACP] + CO2. Its pathway is cofactor biosynthesis; biotin biosynthesis; 8-amino-7-oxononanoate from pimeloyl-CoA: step 1/1. Functionally, catalyzes the decarboxylative condensation of pimeloyl-[acyl-carrier protein] and L-alanine to produce 8-amino-7-oxononanoate (AON), [acyl-carrier protein], and carbon dioxide. Required for the biosynthesis of D-biotin that prevents light-mediated cell death and modulates defense gene expression, probably by avoiding hydrogen peroxide H(2)O(2) accumulation. This Arabidopsis thaliana (Mouse-ear cress) protein is 8-amino-7-oxononanoate synthase.